The following is a 193-amino-acid chain: Cyanate hydratase (193 aa).

Catalysis depends on residues arginine 121, glutamate 124, and serine 147.

The protein belongs to the cyanase family.

It carries out the reaction cyanate + hydrogencarbonate + 3 H(+) = NH4(+) + 2 CO2. Functionally, catalyzes the reaction of cyanate with bicarbonate to produce ammonia and carbon dioxide. The polypeptide is Cyanate hydratase (Phaeodactylum tricornutum (strain CCAP 1055/1)).